Here is a 324-residue protein sequence, read N- to C-terminus: Glyoxylate/hydroxypyruvate reductase B (324 aa).

Active-site residues include arginine 237 and glutamate 266. The Proton donor role is filled by histidine 285.

Belongs to the D-isomer specific 2-hydroxyacid dehydrogenase family. GhrB subfamily. Homodimer.

The protein localises to the cytoplasm. It carries out the reaction glycolate + NADP(+) = glyoxylate + NADPH + H(+). The enzyme catalyses (R)-glycerate + NAD(+) = 3-hydroxypyruvate + NADH + H(+). It catalyses the reaction (R)-glycerate + NADP(+) = 3-hydroxypyruvate + NADPH + H(+). Catalyzes the NADPH-dependent reduction of glyoxylate and hydroxypyruvate into glycolate and glycerate, respectively. This chain is Glyoxylate/hydroxypyruvate reductase B, found in Escherichia fergusonii (strain ATCC 35469 / DSM 13698 / CCUG 18766 / IAM 14443 / JCM 21226 / LMG 7866 / NBRC 102419 / NCTC 12128 / CDC 0568-73).